The chain runs to 206 residues: dTTP/UTP pyrophosphatase (206 aa).

Catalysis depends on Asp-79, which acts as the Proton acceptor.

This sequence belongs to the Maf family. YhdE subfamily. A divalent metal cation serves as cofactor.

It localises to the cytoplasm. The catalysed reaction is dTTP + H2O = dTMP + diphosphate + H(+). It carries out the reaction UTP + H2O = UMP + diphosphate + H(+). Functionally, nucleoside triphosphate pyrophosphatase that hydrolyzes dTTP and UTP. May have a dual role in cell division arrest and in preventing the incorporation of modified nucleotides into cellular nucleic acids. The chain is dTTP/UTP pyrophosphatase from Rhizobium etli (strain ATCC 51251 / DSM 11541 / JCM 21823 / NBRC 15573 / CFN 42).